A 198-amino-acid chain; its full sequence is Suppressor of cytokine signaling 2 (198 aa).

The interval Met-1–Pro-31 is disordered. An interaction with AREL1 region spans residues Met-1 to Ser-75. Phosphoserine is present on residues Ser-30 and Ser-52. One can recognise an SH2 domain in the interval Trp-48–Leu-156. One can recognise an SOCS box domain in the interval Tyr-151–Gln-197. Lys-173 participates in a covalent cross-link: Glycyl lysine isopeptide (Lys-Gly) (interchain with G-Cter in ubiquitin).

Substrate-recognition component of the ECS(SOCS2) complex, composed of SOCS2, CUL5, ELOB, ELOC and RNF7/RBX2. Interacts with IGF1R. Interacts with DCUN1D1. Ubiquitinated; mediated by AREL1 and leading to its subsequent proteasomal degradation. Ubiquitination is dependent on its phosphorylation at Ser-52, by PKC. Ubiquitination is stimulated by LPS. Post-translationally, phosphorylation at Ser-52 by PKC facilitates its ubiquitination and proteasomal degradation.

The protein localises to the cytoplasm. Its pathway is protein modification; protein ubiquitination. Substrate-recognition component of a cullin-5-RING E3 ubiquitin-protein ligase complex (ECS complex, also named CRL5 complex), which mediates the ubiquitination and subsequent proteasomal degradation of target proteins, such as EPOR and GHR. Specifically recognizes and binds phosphorylated proteins via its SH2 domain, promoting their ubiquitination. The ECS(SOCS2) complex acts as a key regulator of growth hormone receptor (GHR) levels by mediating ubiquitination and degradation of GHR, following GHR phosphorylation by JAK2. The ECS(SOCS2) also catalyzes ubiquitination and degradation of JAK2-phosphorylated EPOR. The sequence is that of Suppressor of cytokine signaling 2 (Socs2) from Rattus norvegicus (Rat).